The sequence spans 120 residues: PE family protein PE10 (120 aa).

Residues 29-59 form a disordered region; that stretch reads GQVTGNGGSGNSGTSAAAANPNSDNTASIAD. The span at 40-51 shows a compositional bias: low complexity; that stretch reads SGTSAAAANPNS.

This sequence belongs to the mycobacterial PE family. As to quaternary structure, forms a complex with PE9. The complex interacts with human TLR4.

The protein localises to the secreted. Its subcellular location is the cell wall. Functionally, together with PE9, induces macrophage apoptosis through human Toll-like receptor 4 (TLR4) signaling pathway. Interaction with TLR4 leads to increased levels of phospho-IRF-3, increase in the transcript levels of IFN-beta and pro-apoptotic genes, up-regulation of IL-10, down-regulation of IL-1b and enhanced levels of macrophage apoptosis. The chain is PE family protein PE10 from Mycobacterium tuberculosis (strain ATCC 25618 / H37Rv).